Reading from the N-terminus, the 97-residue chain is MEVTDVRLRRVNTDGRMRAIASITLDHEFVVHDIRVIDGNNGLFVAMPSKRTPDGEFRDIAHPINSSTRGKIQDAVLNEYHRLGDVEEIEYEEIGAS.

The protein belongs to the SpoVG family.

In terms of biological role, essential for sporulation. Interferes with or is a negative regulator of the pathway leading to asymmetric septation. The sequence is that of Putative septation protein SpoVG from Bacillus licheniformis (strain ATCC 14580 / DSM 13 / JCM 2505 / CCUG 7422 / NBRC 12200 / NCIMB 9375 / NCTC 10341 / NRRL NRS-1264 / Gibson 46).